The following is a 381-amino-acid chain: MDRLLTISNHIGKNIRQFSTSTEEVLFEKKGKCLKVLLNRPKALNALNPNMVKILTPKYLEMKTKKDGEGVIVMKGAGEKAFCAGGDIRAIYDYKQLNEEQKSKTNDIGDLFFREEYILNNLIGTNPIAQVSIYNGFAMGGGIGLSVHGKFRVATENTVFAMPETGIGFFCDVGGSYFLPRLPNNYGMYLALTGSKLKGNNVYLAGVATHFVSNEHIQALEKEIEECENPTSQTINSILTKYHDKSKSTSNEYNDNLGDIERIFGKNSVKEIFEQLELLENSEWAKQTLKTLKSVSPSSLMVVFEQMKQGAKLPSLAKCLEMEFRISQHFLEKPDFFEGVRALLVDKDKNPKWLPPSIDQIDQTLVNSYFKPLSNNKELKF.

The transit peptide at 1 to 25 directs the protein to the mitochondrion; it reads MDRLLTISNHIGKNIRQFSTSTEEV. Substrate is bound by residues Glu-116, Gly-141, Glu-164, and Asp-172.

This sequence belongs to the enoyl-CoA hydratase/isomerase family.

It is found in the mitochondrion. It catalyses the reaction 3-hydroxy-2-methylpropanoyl-CoA + H2O = 3-hydroxy-2-methylpropanoate + CoA + H(+). Its pathway is amino-acid degradation; L-valine degradation. In terms of biological role, hydrolyzes 3-hydroxyisobutyryl-CoA (HIBYL-CoA), a saline catabolite. The sequence is that of 3-hydroxyisobutyryl-CoA hydrolase, mitochondrial (hibch) from Dictyostelium discoideum (Social amoeba).